Reading from the N-terminus, the 269-residue chain is MKTPVELAVSGMQTLGLQHRCRGGYRVKARTSYVDETLFGSPAGTRPTPPDFDPPWVEKANRTRGVGKEASKALGAKGSCETTPSRGSTPTLTPRKKNKYRPISHTPSYCDESLFGSRSEGASFGAPRMAKGDAAKLRALLWTPPPTPRGSHSPRPREAPLRAIHPAGPSKTEPGPAADSQKLSMGGLHSSRPLKRGLSHSLTHLNVPSTGHPATSAPHTNGPQDLRPSTSGVTFRSPLVTSRARSVSISVPSTPRRGGATQKPKPPWK.

The short motif at 5 to 17 (VELAVSGMQTLGL) is the Nuclear export signal element. Disordered stretches follow at residues 66–105 (VGKE…PISH) and 141–269 (LWTP…PPWK). Positions 80–92 (CETTPSRGSTPTL) are enriched in polar residues. The Nuclear localization signal motif lies at 92-108 (LTPRKKNKYRPISHTPS). An interaction with RBPJ/RBPSUH region spans residues 128 to 156 (RMAKGDAAKLRALLWTPPPTPRGSHSPRP). The interaction with tubulin stretch occupies residues 156-269 (PREAPLRAIH…ATQKPKPPWK (114 aa)). A compositionally biased stretch (polar residues) spans 200–253 (HSLTHLNVPSTGHPATSAPHTNGPQDLRPSTSGVTFRSPLVTSRARSVSISVPS).

It belongs to the RITA family. As to quaternary structure, interacts with RBPJ/RBPSUH.

Its subcellular location is the cytoplasm. It is found in the nucleus. The protein localises to the cytoskeleton. The protein resides in the microtubule organizing center. It localises to the centrosome. Functionally, tubulin-binding protein that acts as a negative regulator of Notch signaling pathway. Shuttles between the cytoplasm and the nucleus and mediates the nuclear export of RBPJ/RBPSUH, thereby preventing the interaction between RBPJ/RBPSUH and NICD product of Notch proteins (Notch intracellular domain), leading to down-regulate Notch-mediated transcription. May play a role in neurogenesis. In Homo sapiens (Human), this protein is RBPJ-interacting and tubulin-associated protein 1 (RITA1).